The primary structure comprises 337 residues: Dihydroorotate dehydrogenase (quinone) (337 aa).

Residues 61-65 and T85 each bind FMN; that span reads AGLDK. A substrate-binding site is contributed by K65. 110-114 lines the substrate pocket; it reads NRMGF. FMN contacts are provided by N138 and N171. Substrate is bound at residue N171. S174 acts as the Nucleophile in catalysis. Residue N176 participates in substrate binding. Positions 216 and 244 each coordinate FMN. 245 to 246 lines the substrate pocket; it reads NT. FMN-binding positions include G267, G296, and 317 to 318; that span reads YS.

This sequence belongs to the dihydroorotate dehydrogenase family. Type 2 subfamily. Monomer. FMN serves as cofactor.

It is found in the cell membrane. The catalysed reaction is (S)-dihydroorotate + a quinone = orotate + a quinol. The protein operates within pyrimidine metabolism; UMP biosynthesis via de novo pathway; orotate from (S)-dihydroorotate (quinone route): step 1/1. Catalyzes the conversion of dihydroorotate to orotate with quinone as electron acceptor. The sequence is that of Dihydroorotate dehydrogenase (quinone) from Thiobacillus denitrificans (strain ATCC 25259 / T1).